A 152-amino-acid chain; its full sequence is CASP-like protein 5C3 (152 aa).

Residues 1 to 17 (MVEVPGSVGTTASLSLR) are Cytoplasmic-facing. Residues 18 to 38 (LGQMVLAFGSLLFMTIGVRFY) form a helical membrane-spanning segment. Residues 39-42 (QFTA) lie on the Extracellular side of the membrane. A helical membrane pass occupies residues 43 to 63 (FCYLVTIMSLAIPWNLTLAMV). The Cytoplasmic segment spans residues 64–78 (DIYCVILQQPFQKPR). Residues 79 to 99 (ILLAISIGDWVVSVLALASAS) traverse the membrane as a helical segment. Residues 100–128 (SAASVVDILRSNESSCPPTICNRYQFAAT) are Extracellular-facing. An N-linked (GlcNAc...) asparagine glycan is attached at asparagine 111. The helical transmembrane segment at 129–149 (LAFLTWFLSLSSSLFNLWLLP) threads the bilayer. The Cytoplasmic segment spans residues 150 to 152 (SLI).

It belongs to the Casparian strip membrane proteins (CASP) family. In terms of assembly, homodimer and heterodimers. In terms of tissue distribution, expressed in the floral organ abscission zone and flower buds.

It localises to the cell membrane. This is CASP-like protein 5C3 from Arabidopsis thaliana (Mouse-ear cress).